Reading from the N-terminus, the 241-residue chain is Putative lipoprotein YvcA (241 aa).

An N-terminal signal peptide occupies residues 1–18 (MKKIIFICFSLLLALTGG). Residue cysteine 19 is the site of N-palmitoyl cysteine attachment. Cysteine 19 carries the S-diacylglycerol cysteine lipid modification. Residues 22-48 (NDNDKNSTNDNKTEAVKPKDMDPKDLP) are disordered. The segment covering 23 to 46 (DNDKNSTNDNKTEAVKPKDMDPKD) has biased composition (basic and acidic residues).

The protein resides in the cell membrane. Functionally, required for complex colony architecture. This Bacillus subtilis (strain 168) protein is Putative lipoprotein YvcA (yvcA).